A 213-amino-acid polypeptide reads, in one-letter code: Vacuolar ATPase assembly integral membrane protein vph2 (213 aa).

2 helical membrane passes run 113–133 (ISAIINILFTVVGTVTAVWYC) and 142–162 (KIALCAFSAILVLVADTFLYV).

It is found in the endoplasmic reticulum membrane. In terms of biological role, required for vacuolar ATPase assembly. This chain is Vacuolar ATPase assembly integral membrane protein vph2 (vph2), found in Schizosaccharomyces pombe (strain 972 / ATCC 24843) (Fission yeast).